The chain runs to 418 residues: Serine hydroxymethyltransferase (418 aa).

(6S)-5,6,7,8-tetrahydrofolate contacts are provided by residues Leu121 and 125 to 127 (GHL). Lys230 carries the post-translational modification N6-(pyridoxal phosphate)lysine. 356-358 (SPF) contributes to the (6S)-5,6,7,8-tetrahydrofolate binding site.

Belongs to the SHMT family. As to quaternary structure, homodimer. Pyridoxal 5'-phosphate is required as a cofactor.

Its subcellular location is the cytoplasm. It carries out the reaction (6R)-5,10-methylene-5,6,7,8-tetrahydrofolate + glycine + H2O = (6S)-5,6,7,8-tetrahydrofolate + L-serine. It participates in one-carbon metabolism; tetrahydrofolate interconversion. The protein operates within amino-acid biosynthesis; glycine biosynthesis; glycine from L-serine: step 1/1. Functionally, catalyzes the reversible interconversion of serine and glycine with tetrahydrofolate (THF) serving as the one-carbon carrier. This reaction serves as the major source of one-carbon groups required for the biosynthesis of purines, thymidylate, methionine, and other important biomolecules. Also exhibits THF-independent aldolase activity toward beta-hydroxyamino acids, producing glycine and aldehydes, via a retro-aldol mechanism. The sequence is that of Serine hydroxymethyltransferase from Shewanella piezotolerans (strain WP3 / JCM 13877).